Consider the following 246-residue polypeptide: Probable 2-phosphosulfolactate phosphatase (246 aa).

Belongs to the ComB family. The cofactor is Mg(2+).

The enzyme catalyses (2R)-O-phospho-3-sulfolactate + H2O = (2R)-3-sulfolactate + phosphate. The protein is Probable 2-phosphosulfolactate phosphatase of Synechococcus sp. (strain WH7803).